A 133-amino-acid polypeptide reads, in one-letter code: Large ribosomal subunit protein bL17 (133 aa).

This sequence belongs to the bacterial ribosomal protein bL17 family. In terms of assembly, part of the 50S ribosomal subunit. Contacts protein L32.

This Nitratidesulfovibrio vulgaris (strain DSM 19637 / Miyazaki F) (Desulfovibrio vulgaris) protein is Large ribosomal subunit protein bL17.